The chain runs to 222 residues: uncharacterized protein (222 aa).

This sequence belongs to the ycf73 family.

The protein resides in the plastid. It is found in the chloroplast. This is an uncharacterized protein from Oryza nivara (Indian wild rice).